The chain runs to 165 residues: Xanthine-guanine phosphoribosyltransferase (165 aa).

Residues 41–42 (RG) and 98–106 (DDLTDTGKT) contribute to the 5-phospho-alpha-D-ribose 1-diphosphate site. Position 99 (D99) interacts with Mg(2+). Positions 102 and 145 each coordinate guanine. D102 and I145 together coordinate xanthine. GMP is bound by residues 102–106 (DTGKT) and 144–145 (WI).

This sequence belongs to the purine/pyrimidine phosphoribosyltransferase family. XGPT subfamily. As to quaternary structure, homotetramer. Requires Mg(2+) as cofactor.

The protein localises to the cell inner membrane. The enzyme catalyses GMP + diphosphate = guanine + 5-phospho-alpha-D-ribose 1-diphosphate. It catalyses the reaction XMP + diphosphate = xanthine + 5-phospho-alpha-D-ribose 1-diphosphate. The catalysed reaction is IMP + diphosphate = hypoxanthine + 5-phospho-alpha-D-ribose 1-diphosphate. Its pathway is purine metabolism; GMP biosynthesis via salvage pathway; GMP from guanine: step 1/1. The protein operates within purine metabolism; XMP biosynthesis via salvage pathway; XMP from xanthine: step 1/1. Its function is as follows. Purine salvage pathway enzyme that catalyzes the transfer of the ribosyl-5-phosphate group from 5-phospho-alpha-D-ribose 1-diphosphate (PRPP) to the N9 position of the 6-oxopurines guanine and xanthine to form the corresponding ribonucleotides GMP (guanosine 5'-monophosphate) and XMP (xanthosine 5'-monophosphate), with the release of PPi. To a lesser extent, also acts on hypoxanthine. This chain is Xanthine-guanine phosphoribosyltransferase, found in Sinorhizobium medicae (strain WSM419) (Ensifer medicae).